The following is a 554-amino-acid chain: Intraflagellar transport protein 56 (554 aa).

Residues M1 to G24 are disordered. TPR repeat units lie at residues E57–N90, E92–R125, T151–Y184, and A468–R501.

It belongs to the IFT56 family. As to quaternary structure, component of the IFT complex B. Interacts with IFT46; the interaction is direct.

It is found in the cell projection. The protein localises to the cilium. Its function is as follows. Component of the intraflagellar transport (IFT) complex B required for transport of proteins in the motile cilium. Required for transport of specific ciliary cargo proteins related to motility, while it is neither required for IFT complex B assembly or motion nor for cilium assembly. Required for efficient coupling between the accumulation of GLI2 and GLI3 at the ciliary tips and their dissociation from the negative regulator SUFU. Plays a key role in maintaining the integrity of the IFT complex B and the proper ciliary localization of the IFT complex B components. Not required for IFT complex A ciliary localization or function. Essential for maintaining proper microtubule organization within the ciliary axoneme. This is Intraflagellar transport protein 56 from Homo sapiens (Human).